Reading from the N-terminus, the 617-residue chain is Proline--tRNA ligase (617 aa).

Belongs to the class-II aminoacyl-tRNA synthetase family. ProS type 1 subfamily. As to quaternary structure, homodimer.

It localises to the cytoplasm. The enzyme catalyses tRNA(Pro) + L-proline + ATP = L-prolyl-tRNA(Pro) + AMP + diphosphate. In terms of biological role, catalyzes the attachment of proline to tRNA(Pro) in a two-step reaction: proline is first activated by ATP to form Pro-AMP and then transferred to the acceptor end of tRNA(Pro). As ProRS can inadvertently accommodate and process non-cognate amino acids such as alanine and cysteine, to avoid such errors it has two additional distinct editing activities against alanine. One activity is designated as 'pretransfer' editing and involves the tRNA(Pro)-independent hydrolysis of activated Ala-AMP. The other activity is designated 'posttransfer' editing and involves deacylation of mischarged Ala-tRNA(Pro). The misacylated Cys-tRNA(Pro) is not edited by ProRS. This Treponema pallidum (strain Nichols) protein is Proline--tRNA ligase.